A 619-amino-acid chain; its full sequence is Guanylate cyclase soluble subunit beta-1 (619 aa).

His-105 is a heme binding site. Positions 421–554 constitute a Guanylate cyclase domain; the sequence is TILFSGIVGF…NTVNLTSRTE (134 aa).

Belongs to the adenylyl cyclase class-4/guanylyl cyclase family. The active enzyme is formed by a heterodimer of an alpha and a beta subunit. Heterodimer with GUCY1A1. Can also form inactive homodimers in vitro. The cofactor is heme. Detected in brain cortex and cerebellum (at protein level).

It localises to the cytoplasm. It carries out the reaction GTP = 3',5'-cyclic GMP + diphosphate. Activated by nitric oxide in the presence of magnesium or manganese ions. Mediates responses to nitric oxide (NO) by catalyzing the biosynthesis of the signaling molecule cGMP. The chain is Guanylate cyclase soluble subunit beta-1 from Homo sapiens (Human).